A 236-amino-acid polypeptide reads, in one-letter code: Biosynthetic peptidoglycan transglycosylase (236 aa).

The chain crosses the membrane as a helical span at residues 12 to 31; it reads ALFWFAAGSIVLVLVFRWVP.

This sequence belongs to the glycosyltransferase 51 family.

Its subcellular location is the cell inner membrane. The catalysed reaction is [GlcNAc-(1-&gt;4)-Mur2Ac(oyl-L-Ala-gamma-D-Glu-L-Lys-D-Ala-D-Ala)](n)-di-trans,octa-cis-undecaprenyl diphosphate + beta-D-GlcNAc-(1-&gt;4)-Mur2Ac(oyl-L-Ala-gamma-D-Glu-L-Lys-D-Ala-D-Ala)-di-trans,octa-cis-undecaprenyl diphosphate = [GlcNAc-(1-&gt;4)-Mur2Ac(oyl-L-Ala-gamma-D-Glu-L-Lys-D-Ala-D-Ala)](n+1)-di-trans,octa-cis-undecaprenyl diphosphate + di-trans,octa-cis-undecaprenyl diphosphate + H(+). The protein operates within cell wall biogenesis; peptidoglycan biosynthesis. In terms of biological role, peptidoglycan polymerase that catalyzes glycan chain elongation from lipid-linked precursors. This chain is Biosynthetic peptidoglycan transglycosylase, found in Pseudomonas putida (strain W619).